Reading from the N-terminus, the 488-residue chain is Protein unzipped (488 aa).

An N-terminal signal peptide occupies residues 1 to 21 (MTSNSCLISLGLLLVLIQILA). Over 22–465 (PAKAAEHSVF…DVALAGFGVN (444 aa)) the chain is Extracellular. Residues Asn35, Asn232, Asn317, and Asn374 are each glycosylated (N-linked (GlcNAc...) asparagine). The span at 380–400 (TTTTTTTTSTSTTTHATTTST) shows a compositional bias: low complexity. A disordered region spans residues 380–453 (TTTTTTTTST…EAPENMSSDP (74 aa)). Asn448 carries an N-linked (GlcNAc...) asparagine glycan. Residues 466 to 486 (AAGSTFIAGSALLTLLLTIFL) traverse the membrane as a helical segment. Residues 487–488 (SL) lie on the Cytoplasmic side of the membrane.

It localises to the membrane. In terms of biological role, required for normal axon patterning during neurogenesis. This is Protein unzipped (uzip) from Drosophila melanogaster (Fruit fly).